Consider the following 483-residue polypeptide: Serine/threonine-protein kinase BSK4 (483 aa).

Glycine 2 carries the N-myristoyl glycine lipid modification. The Protein kinase domain occupies 56–322 (ENVVSEHGET…DTEVLSHVLM (267 aa)). ATP-binding positions include 62–70 (HGETAPNVV) and lysine 84. Aspartate 178 (proton acceptor) is an active-site residue.

This sequence belongs to the protein kinase superfamily. Ser/Thr protein kinase family.

It localises to the cell membrane. It carries out the reaction L-seryl-[protein] + ATP = O-phospho-L-seryl-[protein] + ADP + H(+). It catalyses the reaction L-threonyl-[protein] + ATP = O-phospho-L-threonyl-[protein] + ADP + H(+). Probable serine/threonine kinase that acts as a positive regulator of brassinosteroid (BR) signaling downstream of the receptor kinase BRI1. Functions redundantly with BSK3, BSK6, BSK7 and BSK8. The chain is Serine/threonine-protein kinase BSK4 from Arabidopsis thaliana (Mouse-ear cress).